A 634-amino-acid polypeptide reads, in one-letter code: Growth hormone receptor (634 aa).

The N-terminal stretch at methionine 1–alanine 18 is a signal peptide. Topologically, residues phenylalanine 19–glutamine 260 are extracellular. Asparagine 46 carries an N-linked (GlcNAc...) asparagine glycan. A disulfide bridge links cysteine 56 with cysteine 66. Asparagine 73 is a glycosylation site (N-linked (GlcNAc...) asparagine). Cysteines 97 and 108 form a disulfide. Asparagine 111 carries N-linked (GlcNAc...) asparagine glycosylation. A disulfide bond links cysteine 122 and cysteine 136. Residues proline 147 to methionine 250 form the Fibronectin type-III domain. N-linked (GlcNAc...) asparagine glycosylation is found at asparagine 152, asparagine 157, and asparagine 196. Positions tyrosine 236–serine 240 match the WSXWS motif motif. Residues phenylalanine 261–serine 284 form a helical membrane-spanning segment. At lysine 285–proline 634 the chain is on the cytoplasmic side. A required for JAK2 binding region spans residues lysine 290–alanine 375. The Box 1 motif motif lies at isoleucine 293–lysine 301. The UbE motif motif lies at aspartate 336 to aspartate 345. Serine 337 bears the Phosphoserine mark.

This sequence belongs to the type I cytokine receptor family. Type 1 subfamily. On growth hormone (GH) binding, forms homodimers and binds JAK2 via a box 1-containing domain. Post-translationally, the soluble form (GHBP) is produced by phorbol ester-promoted proteolytic cleavage at the cell surface (shedding) by ADAM17/TACE. Shedding is inhibited by growth hormone (GH) binding to the receptor probably due to a conformational change in GHR rendering the receptor inaccessible to ADAM17. On GH binding, phosphorylated on tyrosine residues in the cytoplasmic domain by JAK2. In terms of processing, ubiquitinated by the ECS(SOCS2) complex following ligand-binding and phosphorylation by JAK2, leading to its degradation by the proteasome. Regulation by the ECS(SOCS2) complex acts as a negative feedback loop of growth hormone receptor signaling. Ubiquitination is not sufficient for GHR internalization.

It is found in the cell membrane. The protein localises to the secreted. Functionally, receptor for pituitary gland growth hormone (GH1) involved in regulating postnatal body growth. On ligand binding, couples to the JAK2/STAT5 pathway. The soluble form (GHBP) acts as a reservoir of growth hormone in plasma and may be a modulator/inhibitor of GH signaling. This Bos taurus (Bovine) protein is Growth hormone receptor (GHR).